A 240-amino-acid chain; its full sequence is Phosphoribosylaminoimidazole-succinocarboxamide synthase (240 aa).

Belongs to the SAICAR synthetase family.

It carries out the reaction 5-amino-1-(5-phospho-D-ribosyl)imidazole-4-carboxylate + L-aspartate + ATP = (2S)-2-[5-amino-1-(5-phospho-beta-D-ribosyl)imidazole-4-carboxamido]succinate + ADP + phosphate + 2 H(+). It functions in the pathway purine metabolism; IMP biosynthesis via de novo pathway; 5-amino-1-(5-phospho-D-ribosyl)imidazole-4-carboxamide from 5-amino-1-(5-phospho-D-ribosyl)imidazole-4-carboxylate: step 1/2. This Wolbachia sp. subsp. Brugia malayi (strain TRS) protein is Phosphoribosylaminoimidazole-succinocarboxamide synthase.